The following is a 465-amino-acid chain: Argininosuccinate lyase (465 aa).

Belongs to the lyase 1 family. Argininosuccinate lyase subfamily.

Its subcellular location is the cytoplasm. It carries out the reaction 2-(N(omega)-L-arginino)succinate = fumarate + L-arginine. The protein operates within amino-acid biosynthesis; L-arginine biosynthesis; L-arginine from L-ornithine and carbamoyl phosphate: step 3/3. The sequence is that of Argininosuccinate lyase from Rhodopseudomonas palustris (strain ATCC BAA-98 / CGA009).